Reading from the N-terminus, the 213-residue chain is Pyridoxine/pyridoxamine 5'-phosphate oxidase (213 aa).

Substrate is bound by residues 8 to 11 (RKNY) and Lys66. FMN-binding positions include 61–66 (RIVLIK), 76–77 (FT), Arg82, Lys83, and Gln105. Residues Tyr123, Arg127, and Ser131 each coordinate substrate. Residues 140–141 (QS) and Trp184 contribute to the FMN site. Residue 190-192 (RLH) coordinates substrate. Arg194 lines the FMN pocket.

Belongs to the pyridoxamine 5'-phosphate oxidase family. In terms of assembly, homodimer. It depends on FMN as a cofactor.

It carries out the reaction pyridoxamine 5'-phosphate + O2 + H2O = pyridoxal 5'-phosphate + H2O2 + NH4(+). The enzyme catalyses pyridoxine 5'-phosphate + O2 = pyridoxal 5'-phosphate + H2O2. It participates in cofactor metabolism; pyridoxal 5'-phosphate salvage; pyridoxal 5'-phosphate from pyridoxamine 5'-phosphate: step 1/1. It functions in the pathway cofactor metabolism; pyridoxal 5'-phosphate salvage; pyridoxal 5'-phosphate from pyridoxine 5'-phosphate: step 1/1. Functionally, catalyzes the oxidation of either pyridoxine 5'-phosphate (PNP) or pyridoxamine 5'-phosphate (PMP) into pyridoxal 5'-phosphate (PLP). The protein is Pyridoxine/pyridoxamine 5'-phosphate oxidase of Paraburkholderia phytofirmans (strain DSM 17436 / LMG 22146 / PsJN) (Burkholderia phytofirmans).